The following is a 115-amino-acid chain: Large ribosomal subunit protein bL19 (115 aa).

Belongs to the bacterial ribosomal protein bL19 family.

In terms of biological role, this protein is located at the 30S-50S ribosomal subunit interface and may play a role in the structure and function of the aminoacyl-tRNA binding site. This is Large ribosomal subunit protein bL19 from Bacillus pumilus (strain SAFR-032).